The following is a 120-amino-acid chain: UPF0231 protein ETA_08290 (120 aa).

It belongs to the UPF0231 family.

This is UPF0231 protein ETA_08290 from Erwinia tasmaniensis (strain DSM 17950 / CFBP 7177 / CIP 109463 / NCPPB 4357 / Et1/99).